The chain runs to 244 residues: rRNA adenine N-6-methyltransferase (244 aa).

Positions 11, 13, 38, 59, 84, and 101 each coordinate S-adenosyl-L-methionine.

It belongs to the class I-like SAM-binding methyltransferase superfamily. rRNA adenine N(6)-methyltransferase family.

It carries out the reaction adenosine(2085) in 23S rRNA + 2 S-adenosyl-L-methionine = N(6)-dimethyladenosine(2085) in 23S rRNA + 2 S-adenosyl-L-homocysteine + 2 H(+). Its function is as follows. This protein produces a dimethylation of the adenine residue at position 2085 in 23S rRNA, resulting in reduced affinity between ribosomes and macrolide-lincosamide-streptogramin B antibiotics. In Staphylococcus aureus, this protein is rRNA adenine N-6-methyltransferase (ermC).